Reading from the N-terminus, the 298-residue chain is Porphobilinogen deaminase (298 aa).

Cysteine 239 is subject to S-(dipyrrolylmethanemethyl)cysteine.

Belongs to the HMBS family. In terms of assembly, monomer. The cofactor is dipyrromethane.

The enzyme catalyses 4 porphobilinogen + H2O = hydroxymethylbilane + 4 NH4(+). It functions in the pathway porphyrin-containing compound metabolism; protoporphyrin-IX biosynthesis; coproporphyrinogen-III from 5-aminolevulinate: step 2/4. In terms of biological role, tetrapolymerization of the monopyrrole PBG into the hydroxymethylbilane pre-uroporphyrinogen in several discrete steps. The chain is Porphobilinogen deaminase from Orientia tsutsugamushi (strain Boryong) (Rickettsia tsutsugamushi).